Here is a 52-residue protein sequence, read N- to C-terminus: ATP synthase protein 8 (52 aa).

A helical membrane pass occupies residues 7 to 27 (MKWFLIYFIYLLIFYLFIMLI).

The protein belongs to the ATPase protein 8 family. As to quaternary structure, F-type ATPases have 2 components, CF(1) - the catalytic core - and CF(0) - the membrane proton channel.

It localises to the mitochondrion membrane. Functionally, mitochondrial membrane ATP synthase (F(1)F(0) ATP synthase or Complex V) produces ATP from ADP in the presence of a proton gradient across the membrane which is generated by electron transport complexes of the respiratory chain. F-type ATPases consist of two structural domains, F(1) - containing the extramembraneous catalytic core and F(0) - containing the membrane proton channel, linked together by a central stalk and a peripheral stalk. During catalysis, ATP synthesis in the catalytic domain of F(1) is coupled via a rotary mechanism of the central stalk subunits to proton translocation. Part of the complex F(0) domain. Minor subunit located with subunit a in the membrane. This Apis mellifera ligustica (Common honeybee) protein is ATP synthase protein 8 (mt:ATPase8).